The sequence spans 651 residues: LysM domain receptor-like kinase 3 (651 aa).

An N-terminal signal peptide occupies residues 1 to 19 (MNLTFYIFFLSLLPSFSSS). 8 N-linked (GlcNAc...) asparagine glycosylation sites follow: asparagine 2, asparagine 23, asparagine 42, asparagine 73, asparagine 86, asparagine 100, asparagine 114, and asparagine 177. The Extracellular portion of the chain corresponds to 20–236 (KPMNCSDTTR…TAKSGSHVPY (217 aa)). Cystine bridges form between cysteine 24-cysteine 76, cysteine 31-cysteine 133, and cysteine 74-cysteine 131. Residues 142–186 (MSYVAMAGDSVQSLSSRFGVSMDRIEDVNGILNLDNITAGDLLYI) form the LysM domain. A disordered region spans residues 196–216 (YETSKINPPAPSPAPASSLAN). N-linked (GlcNAc...) asparagine glycosylation is found at asparagine 218 and asparagine 225. A helical membrane pass occupies residues 237-257 (IWIVGGLGVVLALLVLCILVC). The Cytoplasmic segment spans residues 258–651 (ICLRSSSCSS…QVFSGLVQGR (394 aa)). Threonine 330 bears the Phosphothreonine mark. One can recognise a Protein kinase domain in the interval 341–628 (FSDSNLLGHG…VVISLSQILL (288 aa)). ATP is bound by residues 347-355 (LGHGNYGSV) and lysine 368. Residue tyrosine 410 is modified to Phosphotyrosine. Aspartate 464 serves as the catalytic Proton acceptor. Serine 468 is subject to Phosphoserine. Phosphothreonine occurs at positions 500 and 505. Tyrosine 513 carries the phosphotyrosine modification.

This sequence belongs to the protein kinase superfamily. Ser/Thr protein kinase family.

It localises to the cell membrane. Its function is as follows. Putative Lysin motif (LysM) receptor kinase that may recognize microbe-derived N-acetylglucosamine (NAG)-containing ligands. The sequence is that of LysM domain receptor-like kinase 3 (LYK3) from Arabidopsis thaliana (Mouse-ear cress).